The primary structure comprises 223 residues: UPF0441 protein YgiB (223 aa).

Residues 178–195 (TVPKTAMAPKPATTTTVT) are compositionally biased toward low complexity. The segment at 178–223 (TVPKTAMAPKPATTTTVTRGGFGESVAKQSTMQRGATGTSSRSMGG) is disordered. A compositionally biased stretch (polar residues) spans 204-223 (AKQSTMQRGATGTSSRSMGG).

It belongs to the UPF0441 family.

The sequence is that of UPF0441 protein YgiB from Escherichia coli O6:K15:H31 (strain 536 / UPEC).